The following is a 95-amino-acid chain: Small ribosomal subunit protein bS6 (95 aa).

It belongs to the bacterial ribosomal protein bS6 family.

Binds together with bS18 to 16S ribosomal RNA. This chain is Small ribosomal subunit protein bS6, found in Streptococcus agalactiae serotype Ia (strain ATCC 27591 / A909 / CDC SS700).